The following is a 689-amino-acid chain: tRNA 5-methylaminomethyl-2-thiouridine biosynthesis bifunctional protein MnmC (689 aa).

The segment at Met1–Pro245 is tRNA (mnm(5)s(2)U34)-methyltransferase. The FAD-dependent cmnm(5)s(2)U34 oxidoreductase stretch occupies residues Ile270–Arg689.

The protein in the N-terminal section; belongs to the methyltransferase superfamily. tRNA (mnm(5)s(2)U34)-methyltransferase family. In the C-terminal section; belongs to the DAO family. The cofactor is FAD.

It localises to the cytoplasm. It catalyses the reaction 5-aminomethyl-2-thiouridine(34) in tRNA + S-adenosyl-L-methionine = 5-methylaminomethyl-2-thiouridine(34) in tRNA + S-adenosyl-L-homocysteine + H(+). Catalyzes the last two steps in the biosynthesis of 5-methylaminomethyl-2-thiouridine (mnm(5)s(2)U) at the wobble position (U34) in tRNA. Catalyzes the FAD-dependent demodification of cmnm(5)s(2)U34 to nm(5)s(2)U34, followed by the transfer of a methyl group from S-adenosyl-L-methionine to nm(5)s(2)U34, to form mnm(5)s(2)U34. This is tRNA 5-methylaminomethyl-2-thiouridine biosynthesis bifunctional protein MnmC from Yersinia pestis.